The chain runs to 265 residues: MKLKAAAVVSCDFGKGKLYPQVMGAGWNESGENRAASSAQLVGWPPVRTFRKNLSTPKPADADDLMNKMKPCSDEGHGSRDAAQERRPSSTMFVKVNLEGYAVGRKIDLKAHRSYDSLSQALQSMFHGFLSDGIATRDNELQRMEEGSKKRYVLVYEDNEGDRMLVGDVPWDGREAGSGRRPAAGVDQVSERPDVSPAMATTPAATVAVTQRRELTNLAATVAAHVLVFLASGQGHINCMMHFAMGDIVELLESLGTNGSLVKGD.

Disordered stretches follow at residues 54 to 88 (LSTP…ERRP) and 172 to 199 (DGRE…SPAM). The segment covering 65–88 (LMNKMKPCSDEGHGSRDAAQERRP) has biased composition (basic and acidic residues). A PB1 domain is found at 91 to 194 (TMFVKVNLEG…GVDQVSERPD (104 aa)).

Belongs to the Aux/IAA family. In terms of assembly, homodimers and heterodimers. As to expression, highly expressed in flowers. Expressed in roots and seedlings.

Its subcellular location is the nucleus. Its function is as follows. Aux/IAA proteins are short-lived transcriptional factors that function as repressors of early auxin response genes at low auxin concentrations. In Oryza sativa subsp. japonica (Rice), this protein is Auxin-responsive protein IAA22 (IAA22).